The following is a 190-amino-acid chain: Nucleoside triphosphate pyrophosphatase (190 aa).

D69 acts as the Proton acceptor in catalysis.

The protein belongs to the Maf family. The cofactor is a divalent metal cation.

The protein resides in the cytoplasm. The catalysed reaction is a ribonucleoside 5'-triphosphate + H2O = a ribonucleoside 5'-phosphate + diphosphate + H(+). The enzyme catalyses a 2'-deoxyribonucleoside 5'-triphosphate + H2O = a 2'-deoxyribonucleoside 5'-phosphate + diphosphate + H(+). Nucleoside triphosphate pyrophosphatase. May have a dual role in cell division arrest and in preventing the incorporation of modified nucleotides into cellular nucleic acids. The polypeptide is Nucleoside triphosphate pyrophosphatase (Helicobacter pylori (strain ATCC 700392 / 26695) (Campylobacter pylori)).